The chain runs to 89 residues: UPF0297 protein SMU_2079c (89 aa).

It belongs to the UPF0297 family.

The polypeptide is UPF0297 protein SMU_2079c (Streptococcus mutans serotype c (strain ATCC 700610 / UA159)).